Reading from the N-terminus, the 407-residue chain is Na(+)-translocating NADH-quinone reductase subunit F (407 aa).

The helical transmembrane segment at 3–23 (ITLGIAMFTVIVLALAVIILF) threads the bilayer. The 95-residue stretch at 32 to 126 (GDITIEINDD…SMKVELPEEV (95 aa)) folds into the 2Fe-2S ferredoxin-type domain. 4 residues coordinate [2Fe-2S] cluster: Cys69, Cys75, Cys78, and Cys110. One can recognise an FAD-binding FR-type domain in the interval 129–269 (VKKWECTVIS…SGPFGEFFAK (141 aa)). The segment at 272-389 (DAEMVFVGGG…PIMNASVIKM (118 aa)) is catalytic.

Belongs to the NqrF family. In terms of assembly, composed of six subunits; NqrA, NqrB, NqrC, NqrD, NqrE and NqrF. The cofactor is [2Fe-2S] cluster. Requires FAD as cofactor.

It is found in the cell inner membrane. The enzyme catalyses a ubiquinone + n Na(+)(in) + NADH + H(+) = a ubiquinol + n Na(+)(out) + NAD(+). Its function is as follows. NQR complex catalyzes the reduction of ubiquinone-1 to ubiquinol by two successive reactions, coupled with the transport of Na(+) ions from the cytoplasm to the periplasm. The first step is catalyzed by NqrF, which accepts electrons from NADH and reduces ubiquinone-1 to ubisemiquinone by a one-electron transfer pathway. The protein is Na(+)-translocating NADH-quinone reductase subunit F of Pasteurella multocida (strain Pm70).